The chain runs to 580 residues: Fumarate hydratase class I, aerobic (580 aa).

Residues cysteine 105, cysteine 224, and cysteine 318 each contribute to the [4Fe-4S] cluster site.

Belongs to the class-I fumarase family. In terms of assembly, homodimer. Requires [4Fe-4S] cluster as cofactor.

The enzyme catalyses (S)-malate = fumarate + H2O. It catalyses the reaction oxaloacetate = enol-oxaloacetate. Its pathway is carbohydrate metabolism; tricarboxylic acid cycle; (S)-malate from fumarate: step 1/1. Functionally, catalyzes the reversible hydration of fumarate to (S)-malate. Functions as an aerobic enzyme in the direction of malate formation as part of the citric acid cycle. Accounts for about 80% of the fumarase activity when the bacteria grow aerobically. To a lesser extent, also displays D-tartrate dehydratase activity in vitro, but is not able to convert (R)-malate, L-tartrate or meso-tartrate. Can also catalyze the isomerization of enol- to keto-oxaloacetate. This is Fumarate hydratase class I, aerobic from Salmonella typhimurium (strain LT2 / SGSC1412 / ATCC 700720).